The chain runs to 321 residues: Bifunctional methyltransferase/endonuclease (321 aa).

The segment at M1 to R86 is probable methylated-DNA--protein-cysteine methyltransferase. C61 is a catalytic residue. Positions L87–I318 are endonuclease V. Positions 145 and 204 each coordinate Mg(2+).

In the N-terminal section; belongs to the MGMT family. This sequence in the C-terminal section; belongs to the endonuclease V family. Requires Mg(2+) as cofactor.

It is found in the cytoplasm. The catalysed reaction is Endonucleolytic cleavage at apurinic or apyrimidinic sites to products with a 5'-phosphate.. Functionally, DNA repair enzyme involved in the repair of deaminated bases. Selectively cleaves double-stranded DNA at the second phosphodiester bond 3' to a deoxyinosine leaving behind the intact lesion on the nicked DNA. The polypeptide is Bifunctional methyltransferase/endonuclease (Thermoplasma volcanium (strain ATCC 51530 / DSM 4299 / JCM 9571 / NBRC 15438 / GSS1)).